A 362-amino-acid polypeptide reads, in one-letter code: MNQTIFNFSAGPAVLPHVVLEQVQAELLDWHGSGMSVMEMSHRGPEFMKIAAEAEQDLRDLLDIPANYKILFLQGGATLQFAMVPLNLMRGHGKASYVQTGIWSKKAIAEARRFTAVEIAASNEDRHASYVPMQADWQVSPDTAYVHITGNETIGGVEFDFIPDLGDIPLVSDASSHILSKPTDVSRFGLIYAGAQKNIGPAGLTLVIVRDDLLGHAPANTATMLDYAVYAKEESMHNTPPTFAIYVAGLVFKWLKQLGGLERMAEINARKARLLYDAIDESRGFYANPVETRNRSRMNVPFTLADAAMDEAFLKGARSHGLIQLKGHRSVGGMRASIYNAMPEAGVQILADYLRDFARQHG.

L-glutamate is bound at residue arginine 43. Pyridoxal 5'-phosphate is bound by residues 77 to 78, tryptophan 103, threonine 153, aspartate 173, and glutamine 196; that span reads AT. An N6-(pyridoxal phosphate)lysine modification is found at lysine 197. A pyridoxal 5'-phosphate-binding site is contributed by 238–239; it reads NT.

The protein belongs to the class-V pyridoxal-phosphate-dependent aminotransferase family. SerC subfamily. In terms of assembly, homodimer. Pyridoxal 5'-phosphate serves as cofactor.

The protein resides in the cytoplasm. It carries out the reaction O-phospho-L-serine + 2-oxoglutarate = 3-phosphooxypyruvate + L-glutamate. The catalysed reaction is 4-(phosphooxy)-L-threonine + 2-oxoglutarate = (R)-3-hydroxy-2-oxo-4-phosphooxybutanoate + L-glutamate. It functions in the pathway amino-acid biosynthesis; L-serine biosynthesis; L-serine from 3-phospho-D-glycerate: step 2/3. It participates in cofactor biosynthesis; pyridoxine 5'-phosphate biosynthesis; pyridoxine 5'-phosphate from D-erythrose 4-phosphate: step 3/5. Catalyzes the reversible conversion of 3-phosphohydroxypyruvate to phosphoserine and of 3-hydroxy-2-oxo-4-phosphonooxybutanoate to phosphohydroxythreonine. The polypeptide is Phosphoserine aminotransferase (Acidithiobacillus ferrooxidans (strain ATCC 23270 / DSM 14882 / CIP 104768 / NCIMB 8455) (Ferrobacillus ferrooxidans (strain ATCC 23270))).